The sequence spans 291 residues: N-acetylmannosamine kinase (291 aa).

Residues 5–12 (AIDIGGTK) and 132–139 (GVGGGVVC) contribute to the ATP site. Zn(2+) is bound by residues histidine 156, cysteine 166, cysteine 168, and cysteine 173.

This sequence belongs to the ROK (NagC/XylR) family. NanK subfamily. Homodimer.

It catalyses the reaction an N-acyl-D-mannosamine + ATP = an N-acyl-D-mannosamine 6-phosphate + ADP + H(+). The protein operates within amino-sugar metabolism; N-acetylneuraminate degradation; D-fructose 6-phosphate from N-acetylneuraminate: step 2/5. Its function is as follows. Catalyzes the phosphorylation of N-acetylmannosamine (ManNAc) to ManNAc-6-P. In Salmonella agona (strain SL483), this protein is N-acetylmannosamine kinase.